We begin with the raw amino-acid sequence, 183 residues long: Streptavidin-V1 (183 aa).

Residues 1-24 (MRKIVVAAIAVSLTTVSITASASA) form the signal peptide. One can recognise an Avidin-like domain in the interval 37-159 (AEAGITGTWY…GHDTFTKVKP (123 aa)). Residues Tyr-67 and Tyr-78 each coordinate biotin. The Cell attachment site; atypical motif lies at 83–85 (RYD). The biotin site is built by Trp-116, Trp-132, and Trp-144.

It belongs to the avidin/streptavidin family. Homotetramer.

It localises to the secreted. Functionally, the biological function of streptavidin is not known. Forms a strong non-covalent specific complex with biotin (one molecule of biotin per subunit of streptavidin). This chain is Streptavidin-V1, found in Streptomyces violaceus (Streptomyces venezuelae).